The primary structure comprises 190 residues: Threonylcarbamoyl-AMP synthase (190 aa).

A YrdC-like domain is found at 7–190 (GDAIAAAIDV…ALTGELFRQG (184 aa)).

It belongs to the SUA5 family. TsaC subfamily.

Its subcellular location is the cytoplasm. It catalyses the reaction L-threonine + hydrogencarbonate + ATP = L-threonylcarbamoyladenylate + diphosphate + H2O. Functionally, required for the formation of a threonylcarbamoyl group on adenosine at position 37 (t(6)A37) in tRNAs that read codons beginning with adenine. Catalyzes the conversion of L-threonine, HCO(3)(-)/CO(2) and ATP to give threonylcarbamoyl-AMP (TC-AMP) as the acyladenylate intermediate, with the release of diphosphate. The chain is Threonylcarbamoyl-AMP synthase from Shigella flexneri.